Here is a 370-residue protein sequence, read N- to C-terminus: Serine O-succinyltransferase (370 aa).

The region spanning 46–355 (AILIVTGLSP…PQGHDAFLVD (310 aa)) is the AB hydrolase-1 domain. The important for substrate specificity stretch occupies residues 52–55 (GLSP). Ser-149 (nucleophile) is an active-site residue. Substrate is bound at residue Arg-218. Active-site residues include Asp-316 and His-349. A substrate-binding site is contributed by Asp-350.

The protein belongs to the AB hydrolase superfamily. MetX family. As to quaternary structure, homodimer.

It is found in the cytoplasm. The catalysed reaction is succinyl-CoA + L-serine = O-succinyl-L-serine + CoA. The enzyme catalyses L-homoserine + succinyl-CoA = O-succinyl-L-homoserine + CoA. It participates in amino-acid biosynthesis; L-cysteine biosynthesis; L-cysteine from L-serine: step 1/2. Transfers a succinyl group from succinyl-CoA to L-serine, forming succinyl-L-serine. In vitro, also has homoserine succinyl transferase activity. The sequence is that of Serine O-succinyltransferase from Stenotrophomonas maltophilia (Pseudomonas maltophilia).